The sequence spans 311 residues: Phosphopantothenate--cysteine ligase (311 aa).

An N-acetylalanine modification is found at Ala-2.

It belongs to the PPC synthetase family. Homodimer.

The enzyme catalyses (R)-4'-phosphopantothenate + L-cysteine + ATP = N-[(R)-4-phosphopantothenoyl]-L-cysteine + AMP + diphosphate + H(+). It catalyses the reaction (R)-4'-phosphopantothenate + L-cysteine + CTP = N-[(R)-4-phosphopantothenoyl]-L-cysteine + CMP + diphosphate + H(+). Its pathway is cofactor biosynthesis; coenzyme A biosynthesis; CoA from (R)-pantothenate: step 2/5. Catalyzes the second step in the biosynthesis of coenzyme A from vitamin B5, where cysteine is conjugated to 4'-phosphopantothenate to form 4-phosphopantothenoylcysteine. Has a preference for ATP over CTP as a cosubstrate. The protein is Phosphopantothenate--cysteine ligase (Ppcs) of Mus musculus (Mouse).